A 453-amino-acid polypeptide reads, in one-letter code: Ribosomal protein uS12 methylthiotransferase RimO (453 aa).

Residues Pro5–Pro120 enclose the MTTase N-terminal domain. Residues Cys14, Cys50, Cys79, Cys151, Cys155, and Cys158 each contribute to the [4Fe-4S] cluster site. Residues Leu137–Asn382 form the Radical SAM core domain. In terms of domain architecture, TRAM spans Gln385 to Val453.

It belongs to the methylthiotransferase family. RimO subfamily. [4Fe-4S] cluster serves as cofactor.

The protein localises to the cytoplasm. The catalysed reaction is L-aspartate(89)-[ribosomal protein uS12]-hydrogen + (sulfur carrier)-SH + AH2 + 2 S-adenosyl-L-methionine = 3-methylsulfanyl-L-aspartate(89)-[ribosomal protein uS12]-hydrogen + (sulfur carrier)-H + 5'-deoxyadenosine + L-methionine + A + S-adenosyl-L-homocysteine + 2 H(+). In terms of biological role, catalyzes the methylthiolation of an aspartic acid residue of ribosomal protein uS12. The chain is Ribosomal protein uS12 methylthiotransferase RimO from Burkholderia cenocepacia (strain HI2424).